The chain runs to 504 residues: Anaerobic nitric oxide reductase transcription regulator NorR (504 aa).

Asp-57 carries the 4-aspartylphosphate modification. Positions 187–416 constitute a Sigma-54 factor interaction domain; sequence MIGLSPGMTQ…LEHAIHRAVV (230 aa). ATP-binding positions include 215-222 and 278-287; these read GETGTGKE and ADNGTLFLDE. The H-T-H motif DNA-binding region spans 479–498; it reads WAACARMLETDVANLHRLAK.

It participates in nitrogen metabolism; nitric oxide reduction. Required for the expression of anaerobic nitric oxide (NO) reductase, acts as a transcriptional activator for at least the norVW operon. Activation also requires sigma-54. The chain is Anaerobic nitric oxide reductase transcription regulator NorR from Escherichia coli O6:H1 (strain CFT073 / ATCC 700928 / UPEC).